A 138-amino-acid polypeptide reads, in one-letter code: Augmin complex subunit msd1 (138 aa).

In terms of assembly, component of the augmin complex composed of dgt2, dgt3, dgt4, dgt5, dgt6, msd1, msd5 and wac. The complex interacts directly or indirectly with microtubules and is required for centrosome-independent generation of spindle microtubules.

It localises to the cytoplasm. It is found in the cytoskeleton. The protein localises to the spindle. In terms of biological role, as part of the augmin complex, plays a role in centrosome-independent generation of spindle microtubules. The complex is required for mitotic spindle assembly through its involvement in localizing gamma-tubulin to spindle microtubules. msd1 is required for microtubule nucleation from within the mitotic spindle and for localization of Grip71 to centrosomes and mitotic spindle. This is Augmin complex subunit msd1 from Drosophila melanogaster (Fruit fly).